The chain runs to 500 residues: Abscisic acid 8'-hydroxylase 3 (500 aa).

A helical membrane pass occupies residues 3–23 (ASFVIVIVISFFISLAFMCYV). C426 provides a ligand contact to heme.

This sequence belongs to the cytochrome P450 family. The cofactor is heme.

Its subcellular location is the membrane. The enzyme catalyses 2-cis-(+)-abscisate + reduced [NADPH--hemoprotein reductase] + O2 = (+)-8'-hydroxyabscisate + oxidized [NADPH--hemoprotein reductase] + H2O + H(+). It participates in plant hormone degradation; abscisic acid degradation. Its function is as follows. Involved in the oxidative degradation of abscisic acid. This chain is Abscisic acid 8'-hydroxylase 3 (CYP707A7), found in Oryza sativa subsp. indica (Rice).